The following is a 138-amino-acid chain: uncharacterized protein (138 aa).

A run of 2 helical transmembrane segments spans residues 21–43 (TAFI…AGGA) and 48–65 (SLIA…YAII).

It localises to the cell membrane. This is an uncharacterized protein from Archaeoglobus fulgidus (strain ATCC 49558 / DSM 4304 / JCM 9628 / NBRC 100126 / VC-16).